A 203-amino-acid polypeptide reads, in one-letter code: Protein-L-isoaspartate O-methyltransferase (203 aa).

Ser-50 is a catalytic residue.

Belongs to the methyltransferase superfamily. L-isoaspartyl/D-aspartyl protein methyltransferase family.

The protein resides in the cytoplasm. The enzyme catalyses [protein]-L-isoaspartate + S-adenosyl-L-methionine = [protein]-L-isoaspartate alpha-methyl ester + S-adenosyl-L-homocysteine. Functionally, catalyzes the methyl esterification of L-isoaspartyl residues in peptides and proteins that result from spontaneous decomposition of normal L-aspartyl and L-asparaginyl residues. It plays a role in the repair and/or degradation of damaged proteins. The protein is Protein-L-isoaspartate O-methyltransferase of Methanococcoides burtonii (strain DSM 6242 / NBRC 107633 / OCM 468 / ACE-M).